The primary structure comprises 837 residues: Katanin p80 WD40 repeat-containing subunit B1 homolog KTN80.4 (837 aa).

7 WD repeats span residues A14–S54, G57–T96, G99–T138, G141–K182, H184–S222, P225–D265, and G267–C304. The DWD box motif lies at F115–R131. 3 disordered regions span residues G307 to V328, G358 to V462, and L501 to N614. 2 stretches are compositionally biased toward polar residues: residues I376–S387 and T412–R450. Positions S509 to D520 are enriched in low complexity. Basic and acidic residues-rich tracts occupy residues A553 to Y563 and R580 to R595.

This sequence belongs to the WD repeat KATNB1 family. In terms of assembly, component of KTN80-KTN1 complexes composed of a hexamer of KTN1-KTN80 heterodimers that sense microtubule (MT) geometry to confer precise MT severing. Interacts directly with AAA1/KTN1, and weakly with KTN80.1 and KTN80.3. In terms of tissue distribution, expressed in siliques, flowers, leaves, stems and roots.

The protein localises to the cytoplasm. It is found in the cytoskeleton. In terms of biological role, may participate in a complex which severs microtubules in an ATP-dependent manner. This activity may promote rapid reorganization of cellular microtubule arrays. Confers precision to microtubule (MT) severing by specific targeting of KTN1 to MT cleavage sites such as crossover or branching nucleation sites. Together with other KTN80s, regulates cell elongation by modulating MT organization. This Arabidopsis thaliana (Mouse-ear cress) protein is Katanin p80 WD40 repeat-containing subunit B1 homolog KTN80.4.